A 242-amino-acid chain; its full sequence is UPF0309 protein BAbS19_II03080 (242 aa).

An SIS domain is found at 30-214 (AADLIAAAAR…ARLVGEGDAP (185 aa)).

The protein belongs to the UPF0309 family.

This is UPF0309 protein BAbS19_II03080 from Brucella abortus (strain S19).